A 284-amino-acid polypeptide reads, in one-letter code: 4-hydroxybenzoate octaprenyltransferase (284 aa).

Helical transmembrane passes span 19 to 39, 42 to 62, 93 to 113, 114 to 134, 136 to 156, 161 to 181, 209 to 229, 235 to 252, and 264 to 284; these read IGTL…AKGM, FDVL…GCVI, IVLF…MNPL, TIKL…MKRF, HLPQ…AWAA, LPSI…AYDT, LMVG…GMHY, FYWA…QQHL, and AFLN…ITFW.

This sequence belongs to the UbiA prenyltransferase family. It depends on Mg(2+) as a cofactor.

Its subcellular location is the cell inner membrane. The enzyme catalyses all-trans-octaprenyl diphosphate + 4-hydroxybenzoate = 4-hydroxy-3-(all-trans-octaprenyl)benzoate + diphosphate. It participates in cofactor biosynthesis; ubiquinone biosynthesis. Catalyzes the prenylation of para-hydroxybenzoate (PHB) with an all-trans polyprenyl group. Mediates the second step in the final reaction sequence of ubiquinone-8 (UQ-8) biosynthesis, which is the condensation of the polyisoprenoid side chain with PHB, generating the first membrane-bound Q intermediate 3-octaprenyl-4-hydroxybenzoate. The protein is 4-hydroxybenzoate octaprenyltransferase of Vibrio atlanticus (strain LGP32) (Vibrio splendidus (strain Mel32)).